Here is a 351-residue protein sequence, read N- to C-terminus: Putative phospho-N-acetylmuramoyl-pentapeptide-transferase (351 aa).

The next 10 helical transmembrane spans lie at 2-22 (MEFLMVFIISTVSAAVFTLFI), 44-64 (AGTPTMGGLGMLLALLLVTVL), 71-91 (LVLTSLIVLTAAIVGLLDDLL), 158-178 (GEKILAQLLIGVFLVLSGAVG), 181-201 (GGFYLGLAAAPIAIAGMVGAI), 212-232 (GMAAGIMLIASLSCAIFLGLS), 235-255 (ALPFLALAGMCAGFLVFNRHP), 258-278 (IFMGDTGSFALGAGYATAVML), 281-301 (TVYFGVLAIAVPVVSVIVSLL), and 328-348 (IVLLYWLITLIVCALGLYMTG).

It belongs to the glycosyltransferase 4 family. MraY subfamily. Mg(2+) serves as cofactor.

It localises to the cell membrane. The enzyme catalyses UDP-N-acetyl-alpha-D-muramoyl-L-alanyl-gamma-D-glutamyl-meso-2,6-diaminopimeloyl-D-alanyl-D-alanine + di-trans,octa-cis-undecaprenyl phosphate = di-trans,octa-cis-undecaprenyl diphospho-N-acetyl-alpha-D-muramoyl-L-alanyl-D-glutamyl-meso-2,6-diaminopimeloyl-D-alanyl-D-alanine + UMP. This is Putative phospho-N-acetylmuramoyl-pentapeptide-transferase from Methanothermobacter thermautotrophicus (strain ATCC 29096 / DSM 1053 / JCM 10044 / NBRC 100330 / Delta H) (Methanobacterium thermoautotrophicum).